Consider the following 83-residue polypeptide: Homeobox protein DLX-2 (83 aa).

Residues 1–14 (STATDSSYYTNQQH) are compositionally biased toward polar residues. 2 disordered regions span residues 1-27 (STATDSSYYTNQQHPAGGGGGGASPYA) and 63-83 (PYGTSSSPVNNEPDKEDLEPE).

Belongs to the distal-less homeobox family. As to quaternary structure, interacts (via homeobox DNA-binding domain) with POU4F2; this interaction enhances retinal ganglion cell (RGC) differentiation.

It is found in the nucleus. Functionally, acts as a transcriptional activator. Activates transcription of CGA/alpha-GSU, via binding to the downstream activin regulatory element (DARE) in the gene promoter. Plays a role in terminal differentiation of interneurons, such as amacrine and bipolar cells in the developing retina. Likely to play a regulatory role in the development of the ventral forebrain. May play a role in craniofacial patterning and morphogenesis. This Rattus norvegicus (Rat) protein is Homeobox protein DLX-2 (Dlx2).